A 276-amino-acid polypeptide reads, in one-letter code: Diaminopimelate epimerase (276 aa).

Residues Asn-13, Gln-46, and Asn-66 each coordinate substrate. Cys-75 acts as the Proton donor in catalysis. Substrate is bound by residues Gly-76–Asn-77, Asn-159, Asn-192, and Glu-210–Arg-211. The active-site Proton acceptor is the Cys-219. Gly-220 to Ser-221 is a substrate binding site.

The protein belongs to the diaminopimelate epimerase family. As to quaternary structure, homodimer.

It is found in the cytoplasm. It catalyses the reaction (2S,6S)-2,6-diaminopimelate = meso-2,6-diaminopimelate. It participates in amino-acid biosynthesis; L-lysine biosynthesis via DAP pathway; DL-2,6-diaminopimelate from LL-2,6-diaminopimelate: step 1/1. In terms of biological role, catalyzes the stereoinversion of LL-2,6-diaminopimelate (L,L-DAP) to meso-diaminopimelate (meso-DAP), a precursor of L-lysine and an essential component of the bacterial peptidoglycan. This chain is Diaminopimelate epimerase, found in Aliivibrio fischeri (strain ATCC 700601 / ES114) (Vibrio fischeri).